The chain runs to 145 residues: Large ribosomal subunit protein uL16 (145 aa).

Belongs to the universal ribosomal protein uL16 family. Part of the 50S ribosomal subunit.

Its function is as follows. Binds 23S rRNA and is also seen to make contacts with the A and possibly P site tRNAs. This is Large ribosomal subunit protein uL16 from Shouchella clausii (strain KSM-K16) (Alkalihalobacillus clausii).